Reading from the N-terminus, the 443-residue chain is Postreplication repair E3 ubiquitin-protein ligase rad18 (443 aa).

An RING-type zinc finger spans residues 30–68; the sequence is CQVCKDFFDNPVITSCSHTFCSLCIRRCLSTEGKCPTCR. The segment at 106 to 157 is disordered; sequence GTDDSGDLAAEEPASKKRKIEPNAIVGTDGLPEEGIRTRSQSRGASRQPQAT. The segment covering 143–157 has biased composition (polar residues); it reads TRSQSRGASRQPQAT. The UBZ4-type zinc-finger motif lies at 175 to 202; sequence LVPCPVCGRRMKEEAVFRHLDSCTGTAE. Cysteine 178, cysteine 181, histidine 193, and cysteine 197 together coordinate Zn(2+). Positions 239-273 constitute an SAP domain; sequence LKDTVLRKKLKDLGIPNWGPRALLQRRHTEWLNLW. Polar residues-rich tracts occupy residues 350–363 and 431–443; these read IPNASQANSDTPRS and PISSSASTHKTPH. The interval 350–443 is disordered; that stretch reads IPNASQANSD…SSASTHKTPH (94 aa).

This sequence belongs to the RAD18 family. In terms of assembly, interacts with E2 UBC2, forming a complex with ubiquitin ligase activity.

It is found in the nucleus. It carries out the reaction S-ubiquitinyl-[E2 ubiquitin-conjugating enzyme]-L-cysteine + [acceptor protein]-L-lysine = [E2 ubiquitin-conjugating enzyme]-L-cysteine + N(6)-ubiquitinyl-[acceptor protein]-L-lysine.. The protein operates within protein modification; protein ubiquitination. Its function is as follows. E3 RING-finger protein, member of the UBC2/RAD6 epistasis group. Associates to the E2 ubiquitin conjugating enzyme UBC2/RAD6 to form the UBC2-RAD18 ubiquitin ligase complex involved in postreplicative repair (PRR) of damaged DNA. In Emericella nidulans (strain FGSC A4 / ATCC 38163 / CBS 112.46 / NRRL 194 / M139) (Aspergillus nidulans), this protein is Postreplication repair E3 ubiquitin-protein ligase rad18 (uvsH).